We begin with the raw amino-acid sequence, 396 residues long: Phosphoglycerate kinase (396 aa).

Residues 19–21 (DFN), Arg34, 57–60 (HLGK), Arg116, and Arg153 each bind substrate. ATP-binding positions include Lys204, Glu324, and 351–354 (GGDT).

It belongs to the phosphoglycerate kinase family. Monomer.

The protein localises to the cytoplasm. The enzyme catalyses (2R)-3-phosphoglycerate + ATP = (2R)-3-phospho-glyceroyl phosphate + ADP. Its pathway is carbohydrate degradation; glycolysis; pyruvate from D-glyceraldehyde 3-phosphate: step 2/5. This Maridesulfovibrio salexigens (strain ATCC 14822 / DSM 2638 / NCIMB 8403 / VKM B-1763) (Desulfovibrio salexigens) protein is Phosphoglycerate kinase.